The following is a 189-amino-acid chain: Nucleoside triphosphate pyrophosphatase (189 aa).

Residue aspartate 70 is the Proton acceptor of the active site.

Belongs to the Maf family. A divalent metal cation serves as cofactor.

It is found in the cytoplasm. The catalysed reaction is a ribonucleoside 5'-triphosphate + H2O = a ribonucleoside 5'-phosphate + diphosphate + H(+). It catalyses the reaction a 2'-deoxyribonucleoside 5'-triphosphate + H2O = a 2'-deoxyribonucleoside 5'-phosphate + diphosphate + H(+). Functionally, nucleoside triphosphate pyrophosphatase. May have a dual role in cell division arrest and in preventing the incorporation of modified nucleotides into cellular nucleic acids. In Xylella fastidiosa (strain 9a5c), this protein is Nucleoside triphosphate pyrophosphatase.